The following is a 296-amino-acid chain: Diaminopimelate epimerase (296 aa).

Substrate contacts are provided by Asn-17, Gln-49, and Asn-69. Residue Cys-78 is the Proton donor of the active site. Residues 79 to 80 (GN), Asn-171, Asn-205, and 223 to 224 (ER) each bind substrate. Cys-232 acts as the Proton acceptor in catalysis. 233 to 234 (GT) contacts substrate.

It belongs to the diaminopimelate epimerase family. As to quaternary structure, homodimer.

It is found in the cytoplasm. The catalysed reaction is (2S,6S)-2,6-diaminopimelate = meso-2,6-diaminopimelate. It functions in the pathway amino-acid biosynthesis; L-lysine biosynthesis via DAP pathway; DL-2,6-diaminopimelate from LL-2,6-diaminopimelate: step 1/1. Catalyzes the stereoinversion of LL-2,6-diaminopimelate (L,L-DAP) to meso-diaminopimelate (meso-DAP), a precursor of L-lysine and an essential component of the bacterial peptidoglycan. In Methylorubrum extorquens (strain CM4 / NCIMB 13688) (Methylobacterium extorquens), this protein is Diaminopimelate epimerase.